A 246-amino-acid chain; its full sequence is Eukaryotic translation initiation factor 6 (246 aa).

It belongs to the eIF-6 family. In terms of assembly, monomer. Associates with the 60S ribosomal subunit.

The protein resides in the cytoplasm. The protein localises to the nucleus. Its subcellular location is the nucleolus. In terms of biological role, binds to the 60S ribosomal subunit and prevents its association with the 40S ribosomal subunit to form the 80S initiation complex in the cytoplasm. May also be involved in ribosome biogenesis. Involved in miRNA-mediated gene silencing. The protein is Eukaryotic translation initiation factor 6 of Caenorhabditis elegans.